The chain runs to 182 residues: Large ribosomal subunit protein bL25 (182 aa).

This sequence belongs to the bacterial ribosomal protein bL25 family. CTC subfamily. As to quaternary structure, part of the 50S ribosomal subunit; part of the 5S rRNA/L5/L18/L25 subcomplex. Contacts the 5S rRNA. Binds to the 5S rRNA independently of L5 and L18.

Its function is as follows. This is one of the proteins that binds to the 5S RNA in the ribosome where it forms part of the central protuberance. This is Large ribosomal subunit protein bL25 from Borreliella burgdorferi (strain ZS7) (Borrelia burgdorferi).